Consider the following 384-residue polypeptide: Flap endonuclease 1 (384 aa).

The N-domain stretch occupies residues 1–105 (MGVKGLNQLI…GELEKRLLKR (105 aa)). D34 provides a ligand contact to Mg(2+). Positions 47 and 71 each coordinate DNA. Residues D87, E159, E161, D180, and D182 each contribute to the Mg(2+) site. An I-domain region spans residues 123-254 (DMTKYQKRLV…VTAYKLIKEH (132 aa)). Residue E159 coordinates DNA. DNA-binding residues include G232 and D234. Position 234 (D234) interacts with Mg(2+). Residues 341 to 349 (IQGRLDGFF) form an interaction with PCNA region. The segment at 354–384 (KYSNTSPLGKDDKKRKTNDKKGAAAKKTKRR) is disordered. Positions 362–375 (GKDDKKRKTNDKKG) are enriched in basic and acidic residues.

This sequence belongs to the XPG/RAD2 endonuclease family. FEN1 subfamily. As to quaternary structure, interacts with PCNA. Three molecules of FEN1 bind to one PCNA trimer with each molecule binding to one PCNA monomer. PCNA stimulates the nuclease activity without altering cleavage specificity. Mg(2+) serves as cofactor. Phosphorylated. Phosphorylation upon DNA damage induces relocalization to the nuclear plasma.

The protein localises to the nucleus. Its subcellular location is the nucleolus. The protein resides in the nucleoplasm. It localises to the mitochondrion. Structure-specific nuclease with 5'-flap endonuclease and 5'-3' exonuclease activities involved in DNA replication and repair. During DNA replication, cleaves the 5'-overhanging flap structure that is generated by displacement synthesis when DNA polymerase encounters the 5'-end of a downstream Okazaki fragment. It enters the flap from the 5'-end and then tracks to cleave the flap base, leaving a nick for ligation. Also involved in the long patch base excision repair (LP-BER) pathway, by cleaving within the apurinic/apyrimidinic (AP) site-terminated flap. Acts as a genome stabilization factor that prevents flaps from equilibrating into structures that lead to duplications and deletions. Also possesses 5'-3' exonuclease activity on nicked or gapped double-stranded DNA, and exhibits RNase H activity. Also involved in replication and repair of rDNA and in repairing mitochondrial DNA. The sequence is that of Flap endonuclease 1 from Lodderomyces elongisporus (strain ATCC 11503 / CBS 2605 / JCM 1781 / NBRC 1676 / NRRL YB-4239) (Yeast).